The sequence spans 71 residues: Small ribosomal subunit protein bS18 (71 aa).

It belongs to the bacterial ribosomal protein bS18 family. In terms of assembly, part of the 30S ribosomal subunit. Forms a tight heterodimer with protein bS6.

Binds as a heterodimer with protein bS6 to the central domain of the 16S rRNA, where it helps stabilize the platform of the 30S subunit. The polypeptide is Small ribosomal subunit protein bS18 (Microcystis aeruginosa (strain NIES-843 / IAM M-2473)).